Consider the following 34-residue polypeptide: Surfactant protein C (34 aa).

Residue Cys4 is the site of S-palmitoyl cysteine attachment.

It is found in the secreted. The protein localises to the extracellular space. The protein resides in the surface film. In terms of biological role, pulmonary surfactant associated proteins promote alveolar stability by lowering the surface tension at the air-liquid interface in the peripheral air spaces. In Canis lupus familiaris (Dog), this protein is Surfactant protein C (SFTPC).